The following is a 343-amino-acid chain: Phosphatidylglycerol--prolipoprotein diacylglyceryl transferase 1 (343 aa).

A run of 4 helical transmembrane segments spans residues 19 to 39, 54 to 74, 93 to 113, and 119 to 139; these read VPLR…VWLG, ADIA…YHVI, IWEG…GAWI, and GVPM…AQAI. R141 lines the a 1,2-diacyl-sn-glycero-3-phospho-(1'-sn-glycerol) pocket. 3 consecutive transmembrane segments (helical) span residues 176 to 196, 202 to 224, and 238 to 258; these read HPTF…VIWA, LGHG…WIEY, and LNNW…VLSA. Residues 269-343 form a disordered region; that stretch reads EPGAETAAGD…TNGADSAKKG (75 aa). A compositionally biased stretch (basic and acidic residues) spans 283–293; that stretch reads ADKDVKGTKDA. Residues 314 to 324 are compositionally biased toward acidic residues; sequence APEDTSGADEA.

It belongs to the Lgt family.

It is found in the cell membrane. The catalysed reaction is L-cysteinyl-[prolipoprotein] + a 1,2-diacyl-sn-glycero-3-phospho-(1'-sn-glycerol) = an S-1,2-diacyl-sn-glyceryl-L-cysteinyl-[prolipoprotein] + sn-glycerol 1-phosphate + H(+). The protein operates within protein modification; lipoprotein biosynthesis (diacylglyceryl transfer). Its function is as follows. Catalyzes the transfer of the diacylglyceryl group from phosphatidylglycerol to the sulfhydryl group of the N-terminal cysteine of a prolipoprotein, the first step in the formation of mature lipoproteins. The sequence is that of Phosphatidylglycerol--prolipoprotein diacylglyceryl transferase 1 from Streptomyces coelicolor (strain ATCC BAA-471 / A3(2) / M145).